The sequence spans 218 residues: MFGHNSKVDLELNREVEKLIKTGGKEKIMPIVQAGEPVLRQQTIAYDGQLSRKTLDKLIDTMRTTMLEAPGVGLAATQIGLGLALAVVEDHVCEGDDGDPREAAEFPFHAIINPSYEPIGTETRSFYEGCLSFDGYQAVRKRWLDITARWQDEDGNKHEEHLHGWPARIFQHETDHLSGELYIDQAEIRSLTTNENLEDFWCEDPVPTEAAAELGFEL.

Residues cysteine 130 and histidine 172 each contribute to the Fe cation site. Residue glutamate 173 is part of the active site. Fe cation is bound at residue histidine 176.

Belongs to the polypeptide deformylase family. It depends on Fe(2+) as a cofactor.

It carries out the reaction N-terminal N-formyl-L-methionyl-[peptide] + H2O = N-terminal L-methionyl-[peptide] + formate. Its function is as follows. Removes the formyl group from the N-terminal Met of newly synthesized proteins. Requires at least a dipeptide for an efficient rate of reaction. N-terminal L-methionine is a prerequisite for activity but the enzyme has broad specificity at other positions. The sequence is that of Peptide deformylase from Bifidobacterium adolescentis (strain ATCC 15703 / DSM 20083 / NCTC 11814 / E194a).